The primary structure comprises 243 residues: MRPLLALLLLGLASGSPPLDDNKIPSLCPGQPGLPGTPGHHGSQGLPGRDGRDGRDGAPGAPGEKGEGGRPGLPGPRGEPGPRGEAGPVGAIGPAGECSVPPRSAFSAKRSESRVPPPADTPLPFDRVLLNEQGHYDATTGKFTCQVPGVYYFAVHATVYRASLQFDLVKNGQSIASFFQFFGGWPKPASLSGGAMVRLEPEDQVWVQVGVGDYIGIYASIKTDSTFSGFLVYSDWHSSPVFA.

The first 15 residues, 1 to 15 (MRPLLALLLLGLASG), serve as a signal peptide directing secretion. Residues 15-124 (GSPPLDDNKI…VPPPADTPLP (110 aa)) are disordered. The Collagen-like domain occupies 30–95 (GQPGLPGTPG…AGPVGAIGPA (66 aa)). One can recognise a C1q domain in the interval 99–238 (SVPPRSAFSA…GFLVYSDWHS (140 aa)).

Homotrimer (via collagen-like domain). May form higher order oligomers by supercoiling of the trimers. May interact with ERFE.

Its subcellular location is the secreted. The protein is Complement C1q tumor necrosis factor-related protein 5 (C1qtnf5) of Rattus norvegicus (Rat).